We begin with the raw amino-acid sequence, 437 residues long: MIQSEEDLEYERNVEMFRLKRLIAKLESMKGSGTSMITLIINFKDQINIHARMLAEEVGKASNIKSRVTRQNVTDALTSTLEKLKLYNKTPPNGLVIFCGLVQQEDGGEKMIKIDLEPFKPINTTLYKCDSVFHTEEVRKLLEDNDKFGFIIMDGNGSLFGTLQGSTRTVLLKFNVDLPKKHGRGGQSANRFARIRIEKRRNYLRKVAESTTACFITNDMPNVKGLILAGSAEFKNDLQKSDLFDLRLQPIVIKLVDISYGGENGFNQAIELSSDALKSVKFIHEKKVIGKFFDEIAKDTGKYVFGIKDTLEAMDMGSVDILIIYENLEYNRLILRDANDNIVNETLHKNKCPSGSKYKNETTGVEYEVLDNIPLTEWFMDNYKKYVSHLEIVTDKSSEGSQFLKGFGGIGGILRYKMDTDFDDTENNNEWNDDDFI.

It belongs to the eukaryotic release factor 1 family. In terms of assembly, heterodimer of two subunits, one of which binds GTP.

It localises to the cytoplasm. In terms of biological role, directs the termination of nascent peptide synthesis (translation) in response to the termination codons UAA and possibly also UAG and UGA. The protein is Eukaryotic peptide chain release factor subunit 1 (eRF1) of Didinium nasutum.